The sequence spans 195 residues: Putative NADH dehydrogenase/NAD(P)H nitroreductase RSc1004 (195 aa).

Belongs to the nitroreductase family. HadB/RutE subfamily. It depends on FMN as a cofactor.

In Ralstonia nicotianae (strain ATCC BAA-1114 / GMI1000) (Ralstonia solanacearum), this protein is Putative NADH dehydrogenase/NAD(P)H nitroreductase RSc1004.